We begin with the raw amino-acid sequence, 611 residues long: MAU2 chromatid cohesion factor homolog (611 aa).

5 TPR repeats span residues 11 to 46 (YAGL…NPPP), 91 to 124 (FEAS…TSGE), 131 to 164 (FRLF…AEQC), 371 to 404 (PILH…ADNP), and 490 to 523 (ACSL…SGKI). The disordered stretch occupies residues 581-611 (WTGAVSPTKSSTIPPQQSFQTWSQPGPSRLS). Residues 585–611 (VSPTKSSTIPPQQSFQTWSQPGPSRLS) show a composition bias toward polar residues.

Belongs to the SCC4/mau-2 family. Component of the cohesin loading complex.

The protein localises to the nucleus. Its subcellular location is the nucleoplasm. In terms of biological role, required for association of the cohesin complex with chromatin during interphase. Plays a role in sister chromatid cohesion and normal progression through prometaphase. The sequence is that of MAU2 chromatid cohesion factor homolog from Nematostella vectensis (Starlet sea anemone).